The sequence spans 142 residues: Hemoglobin subunit alpha (142 aa).

Residues 1-142 (GLTAADKTLI…VEKALFETYR (142 aa)) form the Globin domain. His-59 serves as a coordination point for O2. His-88 contributes to the heme b binding site.

This sequence belongs to the globin family. As to quaternary structure, heterotetramer of two alpha chains and two beta chains (an easy dimerization is also reported). Red blood cells.

Its function is as follows. Involved in oxygen transport from the lung to the various peripheral tissues. This Latimeria chalumnae (Coelacanth) protein is Hemoglobin subunit alpha (HBA).